The primary structure comprises 158 residues: Male-specific protein scotti (158 aa).

The segment at Asn-24 to Ala-43 is disordered. A compositionally biased stretch (acidic residues) spans Gly-30 to Asp-42.

Belongs to the male-specific scotti family.

In terms of biological role, post-meiotically transcribed gene that has a role in late spermiogenesis; required for actin cone progression during spermatid individualization. The chain is Male-specific protein scotti from Drosophila virilis (Fruit fly).